We begin with the raw amino-acid sequence, 376 residues long: MSEQFQMTRRSMLAGAAIAGAVTPLIGAVSAHAEEAVAKTAHINVASLPRVKVDLVKPPFVHAHTQKAEGGPKVVEFTLTIEEKKIVIDEQGTELHAMTFNGSVPGPLMVVHQDDYVELTLINPDTNTLQHNIDFHSATGALGGGALTVVNPGDTTVLRFKASKAGVFVYHCAPPGMVPWHVTSGMNGAIMVLPREGLTDGKGNSITYDKVYYVGEQDFYVPRDANGKFKKYESVGEAYADTLEVMRTLTPSHIVFNGAVGALTGDSALKAAVGEKVLIVHSQANRDTRPHLIGGHGDYVWATGKFRNAPDVDQETWFIPGGTAGAAFYTFEQPGIYAYVNHNLIEAFELGAAAHFAVTGDWNDDLMTSVRAPSGT.

A signal peptide (tat-type signal) is located at residues 1–33 (MSEQFQMTRRSMLAGAAIAGAVTPLIGAVSAHA). 2 Plastocyanin-like domains span residues 98–193 (MTFN…IMVL) and 258–359 (GAVG…FAVT). His-131, His-136, His-171, Cys-172, His-181, Met-186, and His-342 together coordinate Cu cation.

Belongs to the multicopper oxidase family. Homotrimer. Cu(2+) serves as cofactor. The cofactor is Cu(+). FAD is required as a cofactor. Predicted to be exported by the Tat system. The position of the signal peptide cleavage has not been experimentally proven.

The protein localises to the periplasm. It catalyses the reaction nitric oxide + Fe(III)-[cytochrome c] + H2O = Fe(II)-[cytochrome c] + nitrite + 2 H(+). Its pathway is nitrogen metabolism; nitrate reduction (denitrification); dinitrogen from nitrate: step 2/4. This chain is Copper-containing nitrite reductase (nirK), found in Rhizobium meliloti (strain 1021) (Ensifer meliloti).